A 948-amino-acid polypeptide reads, in one-letter code: RNA polymerase-associated protein RapA (948 aa).

The region spanning 164–332 is the Helicase ATP-binding domain; sequence EVADRIAPRV…FARLRLLDPN (169 aa). ATP is bound at residue 177-184; it reads DEVGLGKT. Positions 278 to 281 match the DEAH box motif; the sequence is DEAH. The region spanning 473 to 627 is the Helicase C-terminal domain; it reads RVEWLIDTLK…TCPTGNALQH (155 aa).

This sequence belongs to the SNF2/RAD54 helicase family. RapA subfamily. Interacts with the RNAP. Has a higher affinity for the core RNAP than for the holoenzyme. Its ATPase activity is stimulated by binding to RNAP.

Its function is as follows. Transcription regulator that activates transcription by stimulating RNA polymerase (RNAP) recycling in case of stress conditions such as supercoiled DNA or high salt concentrations. Probably acts by releasing the RNAP, when it is trapped or immobilized on tightly supercoiled DNA. Does not activate transcription on linear DNA. Probably not involved in DNA repair. The protein is RNA polymerase-associated protein RapA of Pseudomonas syringae pv. tomato (strain ATCC BAA-871 / DC3000).